We begin with the raw amino-acid sequence, 789 residues long: Polyribonucleotide nucleotidyltransferase (789 aa).

Mg(2+)-binding residues include aspartate 494 and aspartate 500. The KH domain maps to 561–620; it reads PRIESIFINKDKIRNVIGSGGKNIREICEKTGARVEIMQDGTVMIYAINNDAVEYAKNMI. The S1 motif domain occupies 630–697; that stretch reads GKVFDGTVIE…DREYVQLSMR (68 aa). Positions 709 to 789 are disordered; sequence GELYNIRKTN…NEVPRKPRFF (81 aa). The segment covering 737–749 has biased composition (basic residues); that stretch reads SEKKRRGSGRSRR. A compositionally biased stretch (low complexity) spans 763–780; sequence NNGFGNGNRSFNDNRNGN.

The protein belongs to the polyribonucleotide nucleotidyltransferase family. Requires Mg(2+) as cofactor.

It is found in the cytoplasm. The catalysed reaction is RNA(n+1) + phosphate = RNA(n) + a ribonucleoside 5'-diphosphate. Functionally, involved in mRNA degradation. Catalyzes the phosphorolysis of single-stranded polyribonucleotides processively in the 3'- to 5'-direction. The chain is Polyribonucleotide nucleotidyltransferase from Ehrlichia ruminantium (strain Gardel).